A 129-amino-acid polypeptide reads, in one-letter code: Small ribosomal subunit protein uS13 (129 aa).

The tract at residues 96–129 (GLPVRGQRTSTNARTRKGPRKTVGVSKAAAAAKA) is disordered.

This sequence belongs to the universal ribosomal protein uS13 family. As to quaternary structure, part of the 30S ribosomal subunit. Forms a loose heterodimer with protein S19. Forms two bridges to the 50S subunit in the 70S ribosome.

Functionally, located at the top of the head of the 30S subunit, it contacts several helices of the 16S rRNA. In the 70S ribosome it contacts the 23S rRNA (bridge B1a) and protein L5 of the 50S subunit (bridge B1b), connecting the 2 subunits; these bridges are implicated in subunit movement. Contacts the tRNAs in the A and P-sites. The protein is Small ribosomal subunit protein uS13 of Opitutus terrae (strain DSM 11246 / JCM 15787 / PB90-1).